The chain runs to 739 residues: Vascular cell adhesion protein 1 (739 aa).

Positions 1-24 are cleaved as a signal peptide; that stretch reads MPRKMVVIFGASNILWMVFAVSQA. 7 Ig-like C2-type domains span residues 25–105, 109–212, 223–309, 312–399, 408–506, 511–595, and 600–684; these read SKME…KKLE, QVEI…KERE, PRNT…LIVQ, PFTV…IKVD, EVEM…QTLY, PRDT…VELI, and PKDI…LTLD. The Extracellular portion of the chain corresponds to 25–698; sequence SKMEIFLEPR…ENNKDYFSPE (674 aa). Intrachain disulfides connect C47–C95, C52–C99, C137–C195, C246–C291, and C335–C383. N76 and N77 each carry an N-linked (GlcNAc...) asparagine glycan. A glycan (N-linked (GlcNAc...) asparagine) is linked at N273. N531 is a glycosylation site (N-linked (GlcNAc...) asparagine). A disulfide bond links C534 and C579. The chain crosses the membrane as a helical span at residues 699 to 720; it reads LLVLYCASSLIIPAIGMIIYFA. The Cytoplasmic segment spans residues 721–739; that stretch reads RRANMKGSYSLVEAQKSKV.

Post-translationally, cleaved by the metalloproteinase ADAM17 to generate the soluble form. Sialoglycoprotein. In terms of processing, ubiquitinated by TRIM65 via 'Lys-48'-linked ubiquitination; leading to proteasomal degradation.

The protein localises to the cell membrane. It is found in the secreted. In terms of biological role, cell adhesion glycoprotein predominantly expressed on the surface of endothelial cells that plays an important role in immune surveillance and inflammation. Acts as a major regulator of leukocyte adhesion to the endothelium through interaction with different types of integrins. During inflammatory responses, binds ligands on the surface of activated endothelial cells to initiate the activation of calcium channels and the plasma membrane-associated small GTPase RAC1 leading to leukocyte transendothelial migration. Also serves as a quality-control checkpoint for entry into bone marrow by providing a 'don't-eat-me' stamping in the context of major histocompatibility complex (MHC) class-I presentation. The polypeptide is Vascular cell adhesion protein 1 (VCAM1) (Canis lupus familiaris (Dog)).